The chain runs to 424 residues: UPF0415 protein C7orf25 homolog (424 aa).

The protein belongs to the UPF0415 family.

The chain is UPF0415 protein C7orf25 homolog from Xenopus laevis (African clawed frog).